Reading from the N-terminus, the 463-residue chain is Interstitial collagenase B (463 aa).

An N-terminal signal peptide occupies residues 1–17 (MPSLPLLLRLWAASSYS). The propeptide at 18 to 96 (FPVIQDGLQK…PRCGVPDVAP (79 aa)) is activation peptide. A Cysteine switch motif is present at residues 87–94 (PRCGVPDV). Residue Cys-89 participates in Zn(2+) binding. The segment at 95 to 273 (APYAITHNNP…PIQLTDATLD (179 aa)) is metalloprotease. Asp-155 is a binding site for Ca(2+). Residues His-165 and Asp-167 each coordinate Zn(2+). Residues Asp-172 and Gly-173 each contribute to the Ca(2+) site. Zn(2+) is bound at residue His-180. Positions 187 and 189 each coordinate Ca(2+). Zn(2+) is bound at residue His-193. Asp-195 provides a ligand contact to Ca(2+). His-215 is a Zn(2+) binding site. Glu-216 is a catalytic residue. 2 residues coordinate Zn(2+): His-219 and His-225. An intrachain disulfide couples Cys-275 to Cys-463. Hemopexin repeat units lie at residues 278–321 (GLTF…WPNL) and 322–368 (PGKF…FGFP). Asp-282 is a binding site for Ca(2+). An N-linked (GlcNAc...) asparagine glycan is attached at Asn-370. Hemopexin repeat units lie at residues 371 to 419 (VTNI…FPGI) and 420 to 463 (DYKV…WFNC). Ca(2+) contacts are provided by Asp-375 and Asp-424.

The protein belongs to the peptidase M10A family. Requires Ca(2+) as cofactor. It depends on Zn(2+) as a cofactor.

The protein resides in the secreted. Its subcellular location is the extracellular space. The protein localises to the extracellular matrix. The catalysed reaction is Cleavage of the triple helix of collagen at about three-quarters of the length of the molecule from the N-terminus, at 775-Gly-|-Ile-776 in the alpha1(I) chain. Cleaves synthetic substrates and alpha-macroglobulins at bonds where P1' is a hydrophobic residue.. Its activity is regulated as follows. Can be activated without removal of the activation peptide. In Mus musculus (Mouse), this protein is Interstitial collagenase B (Mmp1b).